A 691-amino-acid polypeptide reads, in one-letter code: DNA ligase (691 aa).

NAD(+) contacts are provided by residues 41–45 (DAEFD), 91–92 (SL), and glutamate 121. The N6-AMP-lysine intermediate role is filled by lysine 123. NAD(+) is bound by residues arginine 144, glutamate 184, lysine 300, and lysine 324. Positions 418, 421, 437, and 443 each coordinate Zn(2+). Residues 607-691 (SVPRTLAGLT…LLADGPASRT (85 aa)) enclose the BRCT domain.

Belongs to the NAD-dependent DNA ligase family. LigA subfamily. Mg(2+) serves as cofactor. Mn(2+) is required as a cofactor.

The catalysed reaction is NAD(+) + (deoxyribonucleotide)n-3'-hydroxyl + 5'-phospho-(deoxyribonucleotide)m = (deoxyribonucleotide)n+m + AMP + beta-nicotinamide D-nucleotide.. DNA ligase that catalyzes the formation of phosphodiester linkages between 5'-phosphoryl and 3'-hydroxyl groups in double-stranded DNA using NAD as a coenzyme and as the energy source for the reaction. It is essential for DNA replication and repair of damaged DNA. The chain is DNA ligase from Mycobacterium tuberculosis (strain ATCC 25177 / H37Ra).